Reading from the N-terminus, the 349-residue chain is sn-glycerol-3-phosphate import ATP-binding protein UgpC (349 aa).

Residues V4 to M235 form the ABC transporter domain. G37–S44 provides a ligand contact to ATP.

It belongs to the ABC transporter superfamily. sn-glycerol-3-phosphate importer (TC 3.A.1.1.3) family. In terms of assembly, the complex is composed of two ATP-binding proteins (UgpC), two transmembrane proteins (UgpA and UgpE) and a solute-binding protein (UgpB).

The protein localises to the cell inner membrane. It carries out the reaction sn-glycerol 3-phosphate(out) + ATP + H2O = sn-glycerol 3-phosphate(in) + ADP + phosphate + H(+). Part of the ABC transporter complex UgpBAEC involved in sn-glycerol-3-phosphate (G3P) import. Responsible for energy coupling to the transport system. This Jannaschia sp. (strain CCS1) protein is sn-glycerol-3-phosphate import ATP-binding protein UgpC.